The sequence spans 446 residues: Tubulin beta-1 chain (446 aa).

Gln13, Glu71, Ser140, Gly144, Thr145, Gly146, Asn206, and Asn228 together coordinate GTP. Position 71 (Glu71) interacts with Mg(2+). The segment at 421–446 (VSEYQQYQDASADDGEEYEEDAPMEE) is disordered. Residues 431–446 (SADDGEEYEEDAPMEE) show a composition bias toward acidic residues.

The protein belongs to the tubulin family. As to quaternary structure, dimer of alpha and beta chains. A typical microtubule is a hollow water-filled tube with an outer diameter of 25 nm and an inner diameter of 15 nM. Alpha-beta heterodimers associate head-to-tail to form protofilaments running lengthwise along the microtubule wall with the beta-tubulin subunit facing the microtubule plus end conferring a structural polarity. Microtubules usually have 13 protofilaments but different protofilament numbers can be found in some organisms and specialized cells. Requires Mg(2+) as cofactor.

The protein localises to the cytoplasm. It is found in the cytoskeleton. Its function is as follows. Tubulin is the major constituent of microtubules, a cylinder consisting of laterally associated linear protofilaments composed of alpha- and beta-tubulin heterodimers. Microtubules grow by the addition of GTP-tubulin dimers to the microtubule end, where a stabilizing cap forms. Below the cap, tubulin dimers are in GDP-bound state, owing to GTPase activity of alpha-tubulin. This is Tubulin beta-1 chain (tub1) from Hypocrea rufa (Trichoderma viride).